Here is a 322-residue protein sequence, read N- to C-terminus: Putative A-type inclusion protein (322 aa).

The disordered stretch occupies residues 284-322; that stretch reads LTTEATGSVEVAPPSTDVTEPISDVTPSVDVEPEHPPAF.

The protein belongs to the chordopoxvirinae A26 protein family.

Its function is as follows. Encodes a truncated version of poxvirus A26 protein. This Vaccinia virus (strain Copenhagen) (VACV) protein is Putative A-type inclusion protein.